The sequence spans 151 residues: Putative calcium-binding protein CML23 (151 aa).

EF-hand domains follow at residues 2–37 (VASDEFRRVFGSFDQDGDGKISATELRLCVKASLGE), 39–74 (MPDEEVQALMALADTDGDGLLDEEEFVRLVTEMEAD), 84–119 (ETCRCLREAFAMYEMEGRGCITPLSLKLMLSKLGTH), and 120–151 (LDVAECQAMICRFDMNGDGVLTFDEFKTMMMA). Ca(2+) is bound by residues D15, D17, D19, K21, E26, D52, D54, D56, and E63. Ca(2+) contacts are provided by D133, N135, D137, and E144.

In terms of biological role, potential calcium sensor. This is Putative calcium-binding protein CML23 (CML23) from Oryza sativa subsp. japonica (Rice).